Here is a 383-residue protein sequence, read N- to C-terminus: Bifunctional enzyme IspD/IspF (383 aa).

The interval Met-1–Thr-226 is 2-C-methyl-D-erythritol 4-phosphate cytidylyltransferase. The 2-C-methyl-D-erythritol 2,4-cyclodiphosphate synthase stretch occupies residues Val-227 to Thr-383. The a divalent metal cation site is built by Asp-233 and His-235. 4-CDP-2-C-methyl-D-erythritol 2-phosphate contacts are provided by residues Asp-233–His-235 and His-259–Ser-260. Residue His-267 participates in a divalent metal cation binding. Residues Asp-281–Gly-283, Thr-357–Glu-360, Phe-364, and Arg-367 contribute to the 4-CDP-2-C-methyl-D-erythritol 2-phosphate site.

The protein in the N-terminal section; belongs to the IspD/TarI cytidylyltransferase family. IspD subfamily. In the C-terminal section; belongs to the IspF family. It depends on a divalent metal cation as a cofactor.

The catalysed reaction is 2-C-methyl-D-erythritol 4-phosphate + CTP + H(+) = 4-CDP-2-C-methyl-D-erythritol + diphosphate. It carries out the reaction 4-CDP-2-C-methyl-D-erythritol 2-phosphate = 2-C-methyl-D-erythritol 2,4-cyclic diphosphate + CMP. It functions in the pathway isoprenoid biosynthesis; isopentenyl diphosphate biosynthesis via DXP pathway; isopentenyl diphosphate from 1-deoxy-D-xylulose 5-phosphate: step 2/6. Its pathway is isoprenoid biosynthesis; isopentenyl diphosphate biosynthesis via DXP pathway; isopentenyl diphosphate from 1-deoxy-D-xylulose 5-phosphate: step 4/6. In terms of biological role, bifunctional enzyme that catalyzes the formation of 4-diphosphocytidyl-2-C-methyl-D-erythritol from CTP and 2-C-methyl-D-erythritol 4-phosphate (MEP) (IspD), and catalyzes the conversion of 4-diphosphocytidyl-2-C-methyl-D-erythritol 2-phosphate (CDP-ME2P) to 2-C-methyl-D-erythritol 2,4-cyclodiphosphate (ME-CPP) with a corresponding release of cytidine 5-monophosphate (CMP) (IspF). The protein is Bifunctional enzyme IspD/IspF of Maricaulis maris (strain MCS10) (Caulobacter maris).